The primary structure comprises 239 residues: Elongation factor Ts (239 aa).

An involved in Mg(2+) ion dislocation from EF-Tu region spans residues 82–85 (TDFV). The segment at 213–239 (AAQTKPKAEEKPAAKKATSKKKKGKKK) is disordered. The span at 229-239 (ATSKKKKGKKK) shows a compositional bias: basic residues.

The protein belongs to the EF-Ts family.

The protein resides in the cytoplasm. Its function is as follows. Associates with the EF-Tu.GDP complex and induces the exchange of GDP to GTP. It remains bound to the aminoacyl-tRNA.EF-Tu.GTP complex up to the GTP hydrolysis stage on the ribosome. This is Elongation factor Ts from Acaryochloris marina (strain MBIC 11017).